The chain runs to 392 residues: DNA primase small subunit PriS (392 aa).

Residues aspartate 98, aspartate 100, and aspartate 295 contribute to the active site.

This sequence belongs to the eukaryotic-type primase small subunit family. As to quaternary structure, heterodimer of a small subunit (PriS) and a large subunit (PriL). Mg(2+) serves as cofactor. Mn(2+) is required as a cofactor.

Functionally, catalytic subunit of DNA primase, an RNA polymerase that catalyzes the synthesis of short RNA molecules used as primers for DNA polymerase during DNA replication. The small subunit contains the primase catalytic core and has DNA synthesis activity on its own. Binding to the large subunit stabilizes and modulates the activity, increasing the rate of DNA synthesis while decreasing the length of the DNA fragments, and conferring RNA synthesis capability. The DNA polymerase activity may enable DNA primase to also catalyze primer extension after primer synthesis. May also play a role in DNA repair. The chain is DNA primase small subunit PriS from Haloarcula marismortui (strain ATCC 43049 / DSM 3752 / JCM 8966 / VKM B-1809) (Halobacterium marismortui).